The chain runs to 523 residues: Glycine betaine transporter 1 (523 aa).

Helical transmembrane passes span 33–53, 71–91, 109–129, 165–185, 214–234, 251–271, 286–306, 337–357, 372–392, 420–440, 467–487, and 496–516; these read VFGI…VLDA, FDWL…ALIV, SFMS…LMFW, FHWG…LAFF, IVDI…LGLG, GLGL…VSVV, MVVA…ASLG, WTVF…MFIA, VLIV…GLAI, VLPF…VFFI, VFWA…GGSE, and AIST…SLLM.

This sequence belongs to the BCCT transporter (TC 2.A.15) family.

The protein resides in the cell inner membrane. Its function is as follows. Involved in the uptake of the osmoprotectant glycine betaine. This is Glycine betaine transporter 1 from Vibrio parahaemolyticus serotype O3:K6 (strain RIMD 2210633).